Here is a 459-residue protein sequence, read N- to C-terminus: Bifunctional protein GlmU (459 aa).

The pyrophosphorylase stretch occupies residues 1 to 230 (MSNRFAVILA…FDETLGVNDR (230 aa)). Residues 9–12 (LAAG), lysine 23, glutamine 73, and 78–79 (GT) contribute to the UDP-N-acetyl-alpha-D-glucosamine site. Aspartate 103 contributes to the Mg(2+) binding site. UDP-N-acetyl-alpha-D-glucosamine-binding residues include glycine 140, glutamate 155, asparagine 170, and asparagine 228. Asparagine 228 contacts Mg(2+). The segment at 231 to 251 (VALSQAEIIMKNRINRKNMVN) is linker. The interval 252-459 (GVTIIDPSNT…VDQLLNKKKS (208 aa)) is N-acetyltransferase. UDP-N-acetyl-alpha-D-glucosamine is bound by residues arginine 333 and lysine 351. Histidine 363 serves as the catalytic Proton acceptor. Tyrosine 366 and asparagine 377 together coordinate UDP-N-acetyl-alpha-D-glucosamine. Acetyl-CoA contacts are provided by residues 386–387 (NY), alanine 423, and arginine 440.

This sequence in the N-terminal section; belongs to the N-acetylglucosamine-1-phosphate uridyltransferase family. It in the C-terminal section; belongs to the transferase hexapeptide repeat family. In terms of assembly, homotrimer. Mg(2+) serves as cofactor.

The protein localises to the cytoplasm. It carries out the reaction alpha-D-glucosamine 1-phosphate + acetyl-CoA = N-acetyl-alpha-D-glucosamine 1-phosphate + CoA + H(+). The enzyme catalyses N-acetyl-alpha-D-glucosamine 1-phosphate + UTP + H(+) = UDP-N-acetyl-alpha-D-glucosamine + diphosphate. Its pathway is nucleotide-sugar biosynthesis; UDP-N-acetyl-alpha-D-glucosamine biosynthesis; N-acetyl-alpha-D-glucosamine 1-phosphate from alpha-D-glucosamine 6-phosphate (route II): step 2/2. It functions in the pathway nucleotide-sugar biosynthesis; UDP-N-acetyl-alpha-D-glucosamine biosynthesis; UDP-N-acetyl-alpha-D-glucosamine from N-acetyl-alpha-D-glucosamine 1-phosphate: step 1/1. It participates in bacterial outer membrane biogenesis; LPS lipid A biosynthesis. In terms of biological role, catalyzes the last two sequential reactions in the de novo biosynthetic pathway for UDP-N-acetylglucosamine (UDP-GlcNAc). The C-terminal domain catalyzes the transfer of acetyl group from acetyl coenzyme A to glucosamine-1-phosphate (GlcN-1-P) to produce N-acetylglucosamine-1-phosphate (GlcNAc-1-P), which is converted into UDP-GlcNAc by the transfer of uridine 5-monophosphate (from uridine 5-triphosphate), a reaction catalyzed by the N-terminal domain. The polypeptide is Bifunctional protein GlmU (Bacillus cereus (strain AH187)).